We begin with the raw amino-acid sequence, 177 residues long: Ribulose bisphosphate carboxylase small subunit, chloroplastic 5 (177 aa).

Residues 1-56 (MASSMMASTAAVARAGPAQSSMVAPFNGLRSSVAFPATRKANNDLSTLPSNGGRVS) constitute a chloroplast transit peptide.

This sequence belongs to the RuBisCO small chain family. As to quaternary structure, heterohexadecamer of 8 large and 8 small subunits.

The protein resides in the plastid. The protein localises to the chloroplast. In terms of biological role, ruBisCO catalyzes two reactions: the carboxylation of D-ribulose 1,5-bisphosphate, the primary event in carbon dioxide fixation, as well as the oxidative fragmentation of the pentose substrate. Both reactions occur simultaneously and in competition at the same active site. Although the small subunit is not catalytic it is essential for maximal activity. The polypeptide is Ribulose bisphosphate carboxylase small subunit, chloroplastic 5 (Lemna gibba (Swollen duckweed)).